The primary structure comprises 621 residues: Intermediate filament protein ifc-2 (621 aa).

A head region spans residues 20–55 (SGAYTSGFGGLVSGMSSAGAICTTQIRDAREREKRE). An IF rod domain is found at 52 to 400 (EKREIGLLND…VLLNGANVTT (349 aa)). Residues 56–87 (IGLLNDRLADYIEKVRFLEAQNQCLSHDIDIL) form a coil 1A region. Residues 88-100 (RRGFSGGGHVSGL) form a linker 1 region. Residues 101–238 (YDTEIAQAKR…TENSTRIEQE (138 aa)) form a coil 1B region. The tract at residues 239–256 (LVFIRRDTTAENRDYFRH) is linker 12. A coil 2 region spans residues 257–400 (ELQAAIRDIR…VLLNGANVTT (144 aa)). The tail stretch occupies residues 401 to 549 (YVSNTHPSGV…RVDVGGFRVE (149 aa)). The region spanning 508–621 (SGRSFHSWYL…EERAWFVYLN (114 aa)) is the LTD domain.

Belongs to the intermediate filament family.

It is found in the cytoplasm. Its function is as follows. Cytoplasmic intermediate filaments provide mechanical strength to cells. This chain is Intermediate filament protein ifc-2, found in Caenorhabditis briggsae.